A 155-amino-acid chain; its full sequence is MRLMRNLMNALLLGAAASSLAVAADRDGEYRLNELQSTDAGYRKAWQNLVEDESRLPDWVMNLSGTATPMHAVDDQGDKYLVGGLCEKSDCKGQRLLVAFDWDKSHAYGLYVQVPEGLPQDKSPSKHASFRWLGKPEPAVQKILDEQLKADPNWY.

Residues M1–A23 form the signal peptide. Cysteines 86 and 91 form a disulfide.

It belongs to the ivy family.

It is found in the periplasm. This is an uncharacterized protein from Pseudomonas aeruginosa (strain ATCC 15692 / DSM 22644 / CIP 104116 / JCM 14847 / LMG 12228 / 1C / PRS 101 / PAO1).